The chain runs to 136 residues: MTERTLVLIKPDGIERQLIGEIISRIERKGLTIAALQLRTVSAELASQHYAEHEGKPFFGSLLEFITSGPVVAAIVEGTRAIAAVRQLAGGTDPVQAAAPGTIRGDFALETQFNLVHGSDSAESAQREIALWFPGA.

ATP contacts are provided by Lys10, Phe58, Arg86, Thr92, Arg104, and Asn114. His117 functions as the Pros-phosphohistidine intermediate in the catalytic mechanism.

The protein belongs to the NDK family. Homohexamer. The cofactor is Mg(2+).

It is found in the cytoplasm. The catalysed reaction is a 2'-deoxyribonucleoside 5'-diphosphate + ATP = a 2'-deoxyribonucleoside 5'-triphosphate + ADP. The enzyme catalyses a ribonucleoside 5'-diphosphate + ATP = a ribonucleoside 5'-triphosphate + ADP. In terms of biological role, major role in the synthesis of nucleoside triphosphates other than ATP. The ATP gamma phosphate is transferred to the NDP beta phosphate via a ping-pong mechanism, using a phosphorylated active-site intermediate. The protein is Nucleoside diphosphate kinase of Mycobacterium bovis (strain ATCC BAA-935 / AF2122/97).